Here is a 263-residue protein sequence, read N- to C-terminus: N-glycosylase/DNA lyase (263 aa).

3 residues coordinate 8-oxoguanine: Gln-43, Ser-71, and Trp-82. The tract at residues 139-204 is helix-hairpin-helix; it reads RRYYFENMMG…EDVRIKAYTE (66 aa). Residue Lys-164 is the Schiff-base intermediate with DNA of the active site. 8-oxoguanine-binding residues include Phe-168 and Pro-194. Asp-196 is a catalytic residue. 8-oxoguanine-binding residues include Asp-230 and Trp-234.

Belongs to the archaeal N-glycosylase/DNA lyase (AGOG) family.

It catalyses the reaction 2'-deoxyribonucleotide-(2'-deoxyribose 5'-phosphate)-2'-deoxyribonucleotide-DNA = a 3'-end 2'-deoxyribonucleotide-(2,3-dehydro-2,3-deoxyribose 5'-phosphate)-DNA + a 5'-end 5'-phospho-2'-deoxyribonucleoside-DNA + H(+). Functionally, DNA repair enzyme that is part of the base excision repair (BER) pathway; protects from oxidative damage by removing the major product of DNA oxidation, 8-oxoguanine (GO), from single- and double-stranded DNA substrates. The polypeptide is N-glycosylase/DNA lyase (Thermococcus kodakarensis (strain ATCC BAA-918 / JCM 12380 / KOD1) (Pyrococcus kodakaraensis (strain KOD1))).